The chain runs to 786 residues: Cas scaffolding protein family member 4 (786 aa).

The 63-residue stretch at 11 to 73 (PKALLARALY…PANRLQILTE (63 aa)) folds into the SH3 domain. Ser200 and Ser249 each carry phosphoserine. The interval 262–295 (SFAEESRPHALPSSSSTFYNPPSGRSRSLTPQLN) is disordered. The span at 273-295 (PSSSSTFYNPPSGRSRSLTPQLN) shows a compositional bias: polar residues. Ser305 carries the phosphoserine modification. Disordered regions lie at residues 361-429 (QAGK…SEES) and 612-670 (IQPP…ERKP). Over residues 364–373 (KELEKAKEVS) the composition is skewed to basic and acidic residues. Polar residues predominate over residues 374–391 (ENSAGHNSSWFSRRTTSP). Phosphoserine is present on residues Ser376 and Ser390. Low complexity predominate over residues 399–427 (SGSSSDSRASIVSSCSTTSTDDSSSSSSE). Residues 630–642 (KQREDEHSSELLK) are compositionally biased toward basic and acidic residues.

This sequence belongs to the CAS family. Interacts (via SH3 domain) with PTK2/FAK1 (via C-terminus). Post-translationally, phosphorylated on tyrosines by SRC. In terms of tissue distribution, expressed abundantly in lung and spleen. Also highly expressed in ovarian and leukemia cell lines.

It localises to the cytoplasm. The protein localises to the cytoskeleton. The protein resides in the cell junction. Its subcellular location is the focal adhesion. Functionally, docking protein that plays a role in tyrosine kinase-based signaling related to cell adhesion and cell spreading. Regulates PTK2/FAK1 activity, focal adhesion integrity, and cell spreading. The sequence is that of Cas scaffolding protein family member 4 (CASS4) from Homo sapiens (Human).